A 433-amino-acid polypeptide reads, in one-letter code: 5-methylthioadenosine/S-adenosylhomocysteine deaminase (433 aa).

Zn(2+) contacts are provided by His-67 and His-69. 3 residues coordinate substrate: Glu-96, Arg-148, and His-187. His-214 is a Zn(2+) binding site. The substrate site is built by Glu-217 and Asp-302. Asp-302 is a Zn(2+) binding site.

The protein belongs to the metallo-dependent hydrolases superfamily. MTA/SAH deaminase family. The cofactor is Zn(2+).

It carries out the reaction S-adenosyl-L-homocysteine + H2O + H(+) = S-inosyl-L-homocysteine + NH4(+). The enzyme catalyses S-methyl-5'-thioadenosine + H2O + H(+) = S-methyl-5'-thioinosine + NH4(+). In terms of biological role, catalyzes the deamination of 5-methylthioadenosine and S-adenosyl-L-homocysteine into 5-methylthioinosine and S-inosyl-L-homocysteine, respectively. Is also able to deaminate adenosine. This Carboxydothermus hydrogenoformans (strain ATCC BAA-161 / DSM 6008 / Z-2901) protein is 5-methylthioadenosine/S-adenosylhomocysteine deaminase.